The chain runs to 141 residues: Large ribosomal subunit protein uL11 (141 aa).

The protein belongs to the universal ribosomal protein uL11 family. Part of the ribosomal stalk of the 50S ribosomal subunit. Interacts with L10 and the large rRNA to form the base of the stalk. L10 forms an elongated spine to which L12 dimers bind in a sequential fashion forming a multimeric L10(L12)X complex. Post-translationally, one or more lysine residues are methylated.

Its function is as follows. Forms part of the ribosomal stalk which helps the ribosome interact with GTP-bound translation factors. The sequence is that of Large ribosomal subunit protein uL11 from Shouchella clausii (strain KSM-K16) (Alkalihalobacillus clausii).